The following is a 103-amino-acid chain: Large ribosomal subunit protein mL63 (103 aa).

The protein belongs to the mitochondrion-specific ribosomal protein mL63 family.

It is found in the mitochondrion. In Danio rerio (Zebrafish), this protein is Large ribosomal subunit protein mL63 (mrpl57).